We begin with the raw amino-acid sequence, 169 residues long: Protein-export protein SecB (169 aa).

It belongs to the SecB family. Homotetramer, a dimer of dimers. One homotetramer interacts with 1 SecA dimer.

Its subcellular location is the cytoplasm. Functionally, one of the proteins required for the normal export of preproteins out of the cell cytoplasm. It is a molecular chaperone that binds to a subset of precursor proteins, maintaining them in a translocation-competent state. It also specifically binds to its receptor SecA. This is Protein-export protein SecB from Mannheimia succiniciproducens (strain KCTC 0769BP / MBEL55E).